Here is a 350-residue protein sequence, read N- to C-terminus: tRNA dimethylallyltransferase (350 aa).

34–41 (GPTASGKT) contributes to the ATP binding site. 36–41 (TASGKT) provides a ligand contact to substrate. 3 interaction with substrate tRNA regions span residues 63-66 (DSAL), 187-191 (QRIQR), and 274-279 (RCVGYR).

It belongs to the IPP transferase family. As to quaternary structure, monomer. Requires Mg(2+) as cofactor.

It carries out the reaction adenosine(37) in tRNA + dimethylallyl diphosphate = N(6)-dimethylallyladenosine(37) in tRNA + diphosphate. Functionally, catalyzes the transfer of a dimethylallyl group onto the adenine at position 37 in tRNAs that read codons beginning with uridine, leading to the formation of N6-(dimethylallyl)adenosine (i(6)A). This Paracidovorax citrulli (strain AAC00-1) (Acidovorax citrulli) protein is tRNA dimethylallyltransferase.